A 595-amino-acid polypeptide reads, in one-letter code: Probable inactive glycosyltransferase 25 family member 3 (595 aa).

A signal peptide spans 1–24; that stretch reads MRAAPAAPLLQLLLLLGPRPEAAG. Residues asparagine 75, asparagine 153, asparagine 237, and asparagine 360 are each glycosylated (N-linked (GlcNAc...) asparagine). Positions 576–595 are disordered; sequence RLDLAGGSGHSLRPHPRDEL. The Prevents secretion from ER motif lies at 592 to 595; it reads RDEL.

Belongs to the glycosyltransferase 25 family.

It localises to the endoplasmic reticulum lumen. Probable cell adhesion protein involved in leukocyte transmigration across the blood-brain barrier. Does not express any beta-galactosyltransferase activity in vitro. The protein is Probable inactive glycosyltransferase 25 family member 3 (CERCAM) of Bos taurus (Bovine).